A 179-amino-acid chain; its full sequence is Probable chorismate pyruvate-lyase (179 aa).

Positions 82, 120, and 165 each coordinate substrate.

The protein belongs to the UbiC family.

It localises to the cytoplasm. It catalyses the reaction chorismate = 4-hydroxybenzoate + pyruvate. The protein operates within cofactor biosynthesis; ubiquinone biosynthesis. Its function is as follows. Removes the pyruvyl group from chorismate, with concomitant aromatization of the ring, to provide 4-hydroxybenzoate (4HB) for the ubiquinone pathway. This chain is Probable chorismate pyruvate-lyase, found in Vibrio vulnificus (strain CMCP6).